The following is a 320-amino-acid chain: Cytochrome f (320 aa).

An N-terminal signal peptide occupies residues 1-35; the sequence is MQNRNTFSWVKEQMTRSISVSIIIYVITRTSISNA. Positions 36, 56, 59, and 60 each coordinate heme. A helical membrane pass occupies residues 286–306; that stretch reads VQGLLFFLASIILAQIFLVLK.

This sequence belongs to the cytochrome f family. In terms of assembly, the 4 large subunits of the cytochrome b6-f complex are cytochrome b6, subunit IV (17 kDa polypeptide, petD), cytochrome f and the Rieske protein, while the 4 small subunits are PetG, PetL, PetM and PetN. The complex functions as a dimer. It depends on heme as a cofactor.

The protein resides in the plastid. The protein localises to the chloroplast thylakoid membrane. In terms of biological role, component of the cytochrome b6-f complex, which mediates electron transfer between photosystem II (PSII) and photosystem I (PSI), cyclic electron flow around PSI, and state transitions. This chain is Cytochrome f, found in Chloranthus spicatus (Chulantree).